A 273-amino-acid polypeptide reads, in one-letter code: Non-homologous end joining protein Ku (273 aa).

The 184-residue stretch at 10–193 (AFGLVNVPVK…KVEIKPAELK (184 aa)) folds into the Ku domain. The tract at residues 111–273 (FLEPDSKSSK…KANSNVPTPP (163 aa)) is sufficient for interaction with LigD.

The protein belongs to the prokaryotic Ku family. In terms of assembly, homodimer. Interacts with LigD.

In terms of biological role, with LigD forms a non-homologous end joining (NHEJ) DNA repair enzyme, which repairs dsDNA breaks with reduced fidelity. Binds linear dsDNA with 5'- and 3'- overhangs but not closed circular dsDNA nor ssDNA. Recruits and stimulates the ligase activity of LigD. This is Non-homologous end joining protein Ku (mku) from Mycobacterium tuberculosis (strain CDC 1551 / Oshkosh).